Consider the following 375-residue polypeptide: Carboxypeptidase O (375 aa).

A signal peptide spans 1–20; that stretch reads MKPLLGTFYLLGMLVPGWLG. One can recognise a Peptidase M14 domain in the interval 50–345; that stretch reads RYHPMGEIYQ…EAVLSVLDDV (296 aa). Residues His109 and Glu112 each contribute to the Zn(2+) site. N-linked (GlcNAc...) asparagine glycosylation is present at Asn175. His237 contributes to the Zn(2+) binding site. Asn252 carries N-linked (GlcNAc...) asparagine glycosylation. Glu311 serves as the catalytic Proton donor/acceptor. Asn315 carries an N-linked (GlcNAc...) asparagine glycan. Ser354 carries GPI-anchor amidated serine lipidation. Residues 355–375 constitute a propeptide, removed in mature form; that stretch reads ARKAKSTALVLGLLMSFMSLL.

It belongs to the peptidase M14 family. The cofactor is Zn(2+).

The protein resides in the apical cell membrane. In terms of biological role, carboxypeptidase which preferentially cleaves C-terminal acidic residues from peptides and proteins. Can also cleave C-terminal hydrophobic amino acids, with a preference for small residues over large residues. This is Carboxypeptidase O from Bos taurus (Bovine).